The following is a 103-amino-acid chain: MSFKSLLKNLPKFFFLGLIHIYRWTISPLLGSPCRFFPTCSQYALQALKHHGCIKGLGFTIKRIGKCGPWHPGGVDLVPMTTLEESLDISPATNDDDSCDSQA.

It belongs to the UPF0161 family.

The protein localises to the cell inner membrane. Its function is as follows. Could be involved in insertion of integral membrane proteins into the membrane. The chain is Putative membrane protein insertion efficiency factor from Chlamydia felis (strain Fe/C-56) (Chlamydophila felis).